We begin with the raw amino-acid sequence, 409 residues long: Peptide chain release factor subunit 1 (409 aa).

It belongs to the eukaryotic release factor 1 family. As to quaternary structure, heterodimer of two subunits, one of which binds GTP.

Its subcellular location is the cytoplasm. Functionally, directs the termination of nascent peptide synthesis (translation) in response to the termination codons UAA, UAG and UGA. The sequence is that of Peptide chain release factor subunit 1 from Methanopyrus kandleri (strain AV19 / DSM 6324 / JCM 9639 / NBRC 100938).